The following is a 392-amino-acid chain: Na(+)/H(+) antiporter NhaA (392 aa).

A run of 11 helical transmembrane segments spans residues 17–37 (ILLIVAAIIALIMANTPLSAL), 59–79 (LILWVNDALMAIFFLVVGLEV), 95–115 (IFPAIAAVGGMLAPALIYLFF), 125–145 (GWAIPAATDIAFALGVMALLG), 154–174 (VFLLALAIIDDLGVIVIIALF), 179–199 (VALVPLLLAALITIMLFILNW), 213–233 (FILWVCILKSGIHATIAGVIV), 254–274 (VLHPWVAYLILPLFAFSNAGV), 290–310 (VGIALGLFLGKPIGIFLFSWV), 328–348 (IFAVSVLCGIGFTMSIFIAGL), and 363–383 (LGILVGSTMAAVVGYLLLNSV).

It belongs to the NhaA Na(+)/H(+) (TC 2.A.33) antiporter family.

It localises to the cell inner membrane. It catalyses the reaction Na(+)(in) + 2 H(+)(out) = Na(+)(out) + 2 H(+)(in). Na(+)/H(+) antiporter that extrudes sodium in exchange for external protons. The protein is Na(+)/H(+) antiporter NhaA of Proteus mirabilis (strain HI4320).